A 145-amino-acid polypeptide reads, in one-letter code: Globin-1 (145 aa).

The region spanning 1-145 (GISADQAKAL…VIVPGMKAGY (145 aa)) is the Globin domain. His63 and His92 together coordinate heme b.

Belongs to the globin family. In terms of assembly, monomer.

The protein is Globin-1 of Liolophura japonica (Chiton).